Consider the following 71-residue polypeptide: uncharacterized protein (71 aa).

Residues 44 to 66 traverse the membrane as a helical segment; sequence LFFLVFRRLFSWFLVLLPSPRFF.

The protein localises to the membrane. This is an uncharacterized protein from Saccharomyces cerevisiae (strain ATCC 204508 / S288c) (Baker's yeast).